Reading from the N-terminus, the 382-residue chain is Anhydro-N-acetylmuramic acid kinase (382 aa).

22–29 lines the ATP pocket; the sequence is GTSMDGVD.

It belongs to the anhydro-N-acetylmuramic acid kinase family.

The catalysed reaction is 1,6-anhydro-N-acetyl-beta-muramate + ATP + H2O = N-acetyl-D-muramate 6-phosphate + ADP + H(+). Its pathway is amino-sugar metabolism; 1,6-anhydro-N-acetylmuramate degradation. The protein operates within cell wall biogenesis; peptidoglycan recycling. Its function is as follows. Catalyzes the specific phosphorylation of 1,6-anhydro-N-acetylmuramic acid (anhMurNAc) with the simultaneous cleavage of the 1,6-anhydro ring, generating MurNAc-6-P. Is required for the utilization of anhMurNAc either imported from the medium or derived from its own cell wall murein, and thus plays a role in cell wall recycling. The chain is Anhydro-N-acetylmuramic acid kinase from Burkholderia lata (strain ATCC 17760 / DSM 23089 / LMG 22485 / NCIMB 9086 / R18194 / 383).